The primary structure comprises 2131 residues: Sodium channel protein para (2131 aa).

The Cytoplasmic portion of the chain corresponds to 1–148 (MTEDSDSISE…FNPIRRVAIY (148 aa)). Over residues 35-48 (HEKQKELERKRAEG) the composition is skewed to basic and acidic residues. The interval 35–84 (HEKQKELERKRAEGEVPQYGRKKKQKEIRYDDEDEDEGPQPDPTLEQGVP) is disordered. Residues 64-73 (YDDEDEDEGP) show a composition bias toward acidic residues. Residues 134-467 (WMLDPFNPIR…AAKAAKLEER (334 aa)) form an I repeat. A helical transmembrane segment spans residues 149–172 (ILVHPLFSLFIITTILVNCILMIM). Residues 173-180 (PTTPTVES) are Extracellular-facing. A helical membrane pass occupies residues 181-199 (TEVIFTGIYTFESAVKVMA). Residues 200-212 (RGFILCPFTYLRD) lie on the Cytoplasmic side of the membrane. Residues 213–231 (AWNWLDFVVIALAYVTMGI) traverse the membrane as a helical segment. Residues 232 to 237 (DLGNLA) lie on the Extracellular side of the membrane. Residues 238–257 (ALRTFRVLRALKTVAIVPGL) traverse the membrane as a helical; Voltage-sensor segment. Topologically, residues 258–273 (KTIVGAVIESVKNLRD) are cytoplasmic. The chain crosses the membrane as a helical span at residues 274 to 297 (VIILTMFSLSVFALMGLQIYMGVL). The Extracellular segment spans residues 298 to 373 (TQKCIKKFPL…PNYGYTSFDS (76 aa)). A disulfide bridge links Cys301 with Cys350. Residues Asn313, Asn325, and Asn343 are each glycosylated (N-linked (GlcNAc...) asparagine). The pore-forming intramembrane region spans 374–398 (FGWAFLSAFRLMTQDFWEDLYQLVL). Residues 399-405 (RAAGPWH) lie on the Extracellular side of the membrane. Residues 406 to 427 (MLFFIVIIFLGSFYLVNLILAI) traverse the membrane as a helical segment. Residues 428 to 812 (VAMSYDELQK…VWLKFQEWVS (385 aa)) are Cytoplasmic-facing. 2 positions are modified to phosphoserine; by PKA: Ser553 and Ser570. 2 disordered regions span residues 553–572 (STTS…GSRS) and 671–691 (KESK…TNGG). Residues 680–691 (TRNQSVGATNGG) show a composition bias toward polar residues. The II repeat unit spans residues 799 to 1069 (DCCWVWLKFQ…IAEAFNRIGR (271 aa)). The helical transmembrane segment at 813–837 (LIVFDPFVELFITLCIVVNTMFMAM) threads the bilayer. Residues 838–848 (DHHDMNKEMER) are Extracellular-facing. A helical membrane pass occupies residues 849-873 (VLKSGNYFFTATFAIEATMKLMAMS). The Cytoplasmic segment spans residues 874–880 (PKYYFQE). The chain crosses the membrane as a helical span at residues 881 to 900 (GWNIFDFIIVALSLLELGLE). At 901–906 (GVQGLS) the chain is on the extracellular side. A helical; Voltage-sensor membrane pass occupies residues 907-926 (VLRSFRLLRVFKLAKSWPTL). The Cytoplasmic segment spans residues 927–941 (NLLISIMGRTMGALG). A helical transmembrane segment spans residues 942–963 (NLTFVLCIIIFIFAVMGMQLFG). The Extracellular segment spans residues 964–985 (KNYHDHKDRFPDGDLPRWNFTD). N-linked (GlcNAc...) asparagine glycosylation is present at Asn982. An intramembrane region (pore-forming) is located at residues 986–1006 (FMHSFMIVFRVLCGEWIESMW). Residues 1007–1013 (DCMYVGD) lie on the Extracellular side of the membrane. Cys1008 and Cys1016 form a disulfide bridge. The chain crosses the membrane as a helical span at residues 1014–1041 (VSCIPFFLATVVIGNLVVLNLFLALLLS). The Cytoplasmic segment spans residues 1042–1296 (NFGSSSLSAP…WGNLRLKTFQ (255 aa)). The interval 1166–1240 (DMKNNKPKKS…LDEEGECEEG (75 aa)) is disordered. Positions 1177–1194 (YLNNATDDDTASINSYGS) are enriched in polar residues. The segment covering 1199 to 1225 (PFKDESHKGSAETMEGEEKRDASKEDL) has biased composition (basic and acidic residues). Over residues 1226–1240 (GLDEELDEEGECEEG) the composition is skewed to acidic residues. One copy of the III repeat lies at 1284-1591 (WQGWGNLRLK…QKKYYNAMKK (308 aa)). A helical transmembrane segment spans residues 1297-1320 (LIENKYFETAVITMILMSSLALAL). Over 1321 to 1334 (EDVHLPQRPILQDI) the chain is Extracellular. Residues 1335–1359 (LYYMDRIFTVIFFLEMLIKWLALGF) form a helical membrane-spanning segment. Over 1360–1365 (KVYFTN) the chain is Cytoplasmic. Residues 1366–1387 (AWCWLDFVIVMVSLINFVASLV) traverse the membrane as a helical segment. Over 1388-1391 (GAGG) the chain is Extracellular. Residues 1392 to 1413 (IQAFKTMRTLRALRPLRAMSRM) form a helical; Voltage-sensor membrane-spanning segment. Residues 1414-1432 (QGMRVVVNALVQAIPSIFN) lie on the Cytoplasmic side of the membrane. The helical transmembrane segment at 1433–1454 (VLLVCLIFWLIFAIMGVQLFAG) threads the bilayer. Residues 1455–1495 (KYFKCEDMNGTKLSHEIIPNRNACESENYTWVNSAMNFDHV) are Extracellular-facing. Asn1463 and Asn1482 each carry an N-linked (GlcNAc...) asparagine glycan. Positions 1496–1517 (GNAYLCLFQVATFKGWIQIMND) form an intramembrane region, pore-forming. Residues 1518-1533 (AIDSREVDKQPIRETN) are Extracellular-facing. Residues 1534–1560 (IYMYLYFVFFIIFGSFFTLNLFIGVII) form a helical membrane-spanning segment. The Cytoplasmic portion of the chain corresponds to 1561-1614 (DNFNEQKKKAGGSLEMFMTEDQKKYYNAMKKMGSKKPLKAIPRPRWRPQAIVFE). One copy of the IV repeat lies at 1601–1862 (IPRPRWRPQA…NMYIAVILEN (262 aa)). A helical transmembrane segment spans residues 1615–1638 (IVTDKKFDIIIMLFIGLNMFTMTL). The Extracellular portion of the chain corresponds to 1639-1649 (DRYDASDTYNA). The chain crosses the membrane as a helical span at residues 1650-1673 (VLDYLNAIFVVIFSSECLLKIFAL). The Cytoplasmic segment spans residues 1674–1679 (RYHYFI). A helical transmembrane segment spans residues 1680-1703 (EPWNLFDVVVVILSILGLVLSDII). At 1704–1713 (EKYFVSPTLL) the chain is on the extracellular side. A helical; Voltage-sensor transmembrane segment spans residues 1714–1735 (RVVRVAKVGRVLRLVKGAKGIR). The Cytoplasmic segment spans residues 1736–1750 (TLLFALAMSLPALFN). Residues 1751–1773 (ICLLLFLVMFIFAIFGMSFFMHV) form a helical membrane-spanning segment. The Extracellular segment spans residues 1774-1787 (KEKSGINDVYNFKT). Positions 1788–1810 (FGQSMILLFQMSTSAGWDGVLDA) form an intramembrane region, pore-forming. The Extracellular segment spans residues 1811-1835 (IINEEACDPPDNDKGYPGNCGSATV). Residues 1836-1860 (GITFLLSYLVISFLIVINMYIAVIL) form a helical membrane-spanning segment. The Cytoplasmic portion of the chain corresponds to 1861–2131 (ENYSQATEDV…PSITSRTADV (271 aa)). The EF-hand domain occupies 1877 to 1912 (DDYDMYYEIWQQFDPEGTQYIRYDQLSEFLDVLEPP). The interval 2001–2096 (HKARGEGGGS…GSPGAGSAGR (96 aa)) is disordered. A compositionally biased stretch (acidic residues) spans 2021 to 2035 (GDPDAGDPAPDEATD). A compositionally biased stretch (low complexity) spans 2068–2088 (AAAAAAAAAAAAAAGTTTAGS).

It belongs to the sodium channel (TC 1.A.1.10) family. Para subfamily.

It localises to the cell membrane. Mediates the voltage-dependent sodium ion permeability of excitable membranes. Assuming opened or closed conformations in response to the voltage difference across the membrane, the protein forms a sodium-selective channel through which Na(+) ions may pass in accordance with their electrochemical gradient. In Drosophila melanogaster (Fruit fly), this protein is Sodium channel protein para (para).